The primary structure comprises 227 residues: Dephospho-CoA kinase (227 aa).

The DPCK domain maps to 31 to 227 (KIGLTGGIGS…EKLFQFINCL (197 aa)). ATP is bound at residue 39 to 44 (GSGKST).

It belongs to the CoaE family.

The protein localises to the cytoplasm. The enzyme catalyses 3'-dephospho-CoA + ATP = ADP + CoA + H(+). It participates in cofactor biosynthesis; coenzyme A biosynthesis; CoA from (R)-pantothenate: step 5/5. Functionally, catalyzes the phosphorylation of the 3'-hydroxyl group of dephosphocoenzyme A to form coenzyme A. This chain is Dephospho-CoA kinase, found in Clostridium tetani (strain Massachusetts / E88).